A 260-amino-acid polypeptide reads, in one-letter code: Putative ABC transporter substrate-binding lipoprotein YvgL (260 aa).

An N-terminal signal peptide occupies residues 1–20 (MFKKYSIFIAALTAFLLVAG). C21 carries N-palmitoyl cysteine lipidation. C21 carries the S-diacylglycerol cysteine lipid modification. Positions 43, 71, 151, 178, and 196 each coordinate molybdate.

The protein belongs to the bacterial solute-binding protein ModA family.

Its subcellular location is the cell membrane. The protein is Putative ABC transporter substrate-binding lipoprotein YvgL (yvgL) of Bacillus subtilis (strain 168).